We begin with the raw amino-acid sequence, 163 residues long: NADH-quinone oxidoreductase subunit I (163 aa).

4Fe-4S ferredoxin-type domains lie at L53 to G83 and V94 to N123. 8 residues coordinate [4Fe-4S] cluster: C63, C66, C69, C73, C103, C106, C109, and C113.

Belongs to the complex I 23 kDa subunit family. As to quaternary structure, NDH-1 is composed of 14 different subunits. Subunits NuoA, H, J, K, L, M, N constitute the membrane sector of the complex. The cofactor is [4Fe-4S] cluster.

It is found in the cell inner membrane. It catalyses the reaction a quinone + NADH + 5 H(+)(in) = a quinol + NAD(+) + 4 H(+)(out). Functionally, NDH-1 shuttles electrons from NADH, via FMN and iron-sulfur (Fe-S) centers, to quinones in the respiratory chain. The immediate electron acceptor for the enzyme in this species is believed to be ubiquinone. Couples the redox reaction to proton translocation (for every two electrons transferred, four hydrogen ions are translocated across the cytoplasmic membrane), and thus conserves the redox energy in a proton gradient. This is NADH-quinone oxidoreductase subunit I from Allorhizobium ampelinum (strain ATCC BAA-846 / DSM 112012 / S4) (Agrobacterium vitis (strain S4)).